Here is a 374-residue protein sequence, read N- to C-terminus: uncharacterized protein (374 aa).

The first 21 residues, 1-21, serve as a signal peptide directing secretion; that stretch reads MSIISRVCIPCAVLLFAQLHA. Residues 22-102 form the Fibronectin type-III domain; it reads KELVHVSQLK…ASASAWTSLS (81 aa).

This is an uncharacterized protein from Treponema pallidum (strain Nichols).